Reading from the N-terminus, the 205-residue chain is Guanylate kinase (205 aa).

The Guanylate kinase-like domain maps to 7-185 (GNIFIISAAS…AEEDLRHIVN (179 aa)). ATP is bound at residue 14–21 (AASGTGKT).

This sequence belongs to the guanylate kinase family.

The protein resides in the cytoplasm. The enzyme catalyses GMP + ATP = GDP + ADP. Essential for recycling GMP and indirectly, cGMP. The chain is Guanylate kinase (gmk) from Neisseria meningitidis serogroup B (strain ATCC BAA-335 / MC58).